The following is a 524-amino-acid chain: Butyrophilin subfamily 1 member A1 (524 aa).

A signal peptide spans 1–26 (MAVPTNSCLLVCLLTLTVLQLPTLDS). Residues 27–247 (AAPFDVTAPQ…APFVPRLTPW (221 aa)) lie on the Extracellular side of the membrane. Ig-like V-type domains follow at residues 29–141 (PFDV…VYLK) and 149–235 (PQIS…VEIS). Disulfide bonds link Cys51-Cys125 and Cys165-Cys219. N-linked (GlcNAc...) asparagine glycans are attached at residues Asn56 and Asn216. The helical transmembrane segment at 248–268 (IVAVAIILLALGFLTIGSIFF) threads the bilayer. At 269–524 (TWKLYKERSS…IPFSPSQAAP (256 aa)) the chain is on the cytoplasmic side. Residues 286-480 (SKERLLEELR…LTICSTANGP (195 aa)) form the B30.2/SPRY domain.

This sequence belongs to the immunoglobulin superfamily. BTN/MOG family. Seems to associate with xanthine dehydrogenase/oxidase. Post-translationally, N-glycosylated. As to expression, strongly expressed in lactating mammary tissue (at protein level). About 100-fold lower levels in virgin mammary tissue. Also detected in spleen and thymus at 10-20 times lower levels compared to those detected in virgin mammary gland. Very low levels in several other tissues, including brain, heart, kidney, lymph node, lung and small intestine. In the thymus, detected in the stroma, in epithelial cells (at protein level). Most prominent in medullary areas of the thymus and at the corticomedullary junction (at protein level).

It localises to the membrane. In terms of biological role, may function in the secretion of milk-fat droplets. May act as a specific membrane-associated receptor for the association of cytoplasmic droplets with the apical plasma membrane. Inhibits the proliferation of CD4 and CD8 T-cells activated by anti-CD3 antibodies, T-cell metabolism and IL2 and IFNG secretion. In Mus musculus (Mouse), this protein is Butyrophilin subfamily 1 member A1 (Btn1a1).